Here is a 574-residue protein sequence, read N- to C-terminus: MEMLSGAEMVVRSLIDQGVKQVFGYPGGAVLDIYDALHTVGGIDHVLVRHEQAAVHMADGLARATGEVGVVLVTSGPGATNAITGIATAYMDSIPLVVLSGQVATSLIGYDAFQECDMVGISRPVVKHSFLVKQTEDIPQVLKKAFWLAASGRPGPVVVDLPKDILNPANKLPYVWPESVSMRSYNPTTTGHKGQIKRALQTLVAAKKPVVYVGGGAITAGCHQQLKETVEALNLPVVCSLMGLGAFPATHRQALGMLGMHGTYEANMTMHNADVIFAVGVRFDDRTTNNLAKYCPNATVLHIDIDPTSISKTVTADIPIVGDARQVLEQMLELLSQESAHQPLDEIRDWWQQIEQWRARQCLKYDTHSEKIKPQAVIETLWRLTKGDAYVTSDVGQHQMFAALYYPFDKPRRWINSGGLGTMGFGLPAALGVKMALPEETVVCVTGDGSIQMNIQELSTALQYELPVLVVNLNNRYLGMVKQWQDMIYSGRHSQSYMQSLPDFVRLAEAYGHVGIQISHPHELESKLSEALEQVRNNRLVFVDVTVDGSEHVYPMQIRGGGMDEMWLSKTERT.

Glutamate 51 is a thiamine diphosphate binding site. FAD is bound by residues arginine 153, 261–282 (HGTY…VGVR), and 304–323 (DIDP…IVGD). A thiamine pyrophosphate binding region spans residues 397 to 477 (QHQMFAALYY…VLVVNLNNRY (81 aa)). Positions 448 and 475 each coordinate Mg(2+).

Belongs to the TPP enzyme family. Dimer of large and small chains. Requires Mg(2+) as cofactor. Thiamine diphosphate serves as cofactor.

It carries out the reaction 2 pyruvate + H(+) = (2S)-2-acetolactate + CO2. Its pathway is amino-acid biosynthesis; L-isoleucine biosynthesis; L-isoleucine from 2-oxobutanoate: step 1/4. It participates in amino-acid biosynthesis; L-valine biosynthesis; L-valine from pyruvate: step 1/4. Sensitive to valine inhibition. This is Acetolactate synthase isozyme 3 large subunit (ilvI) from Escherichia coli (strain K12).